Reading from the N-terminus, the 397-residue chain is uncharacterized protein (397 aa).

The next 9 helical transmembrane spans lie at 1–21, 39–59, 76–96, 103–123, 124–144, 194–214, 219–239, 255–275, and 301–321; these read MGAS…LMLV, VIQS…VVVF, EALS…FGVP, VLLF…FVGA, ALIE…LVMA, MMTP…LFAF, ALFG…FSLL, LVYL…KLML, and QSLT…FWSA.

The protein belongs to the TerC family.

It is found in the cell membrane. This is an uncharacterized protein from Mycobacterium bovis (strain ATCC BAA-935 / AF2122/97).